A 351-amino-acid chain; its full sequence is LETM1 domain-containing protein 1 (351 aa).

Over 1–130 (MLSGMALCRT…FRRDIIKAAP (130 aa)) the chain is Cytoplasmic. Residues 131 to 151 (VVIISIPPFANYLVFVLMYFF) traverse the membrane as a helical segment. The Mitochondrial intermembrane portion of the chain corresponds to 152 to 351 (PRQLLIRHFW…SANYLQSIKQ (200 aa)). The Letm1 RBD domain maps to 172-351 (IYHRMRVEAY…SANYLQSIKQ (180 aa)).

It localises to the mitochondrion outer membrane. It is found in the nucleus. Its subcellular location is the mitochondrion inner membrane. Functionally, may play an essential role for mitochondrial structure and function. The protein is LETM1 domain-containing protein 1 of Xenopus tropicalis (Western clawed frog).